A 442-amino-acid chain; its full sequence is GTPase Obg (442 aa).

Positions 1-158 constitute an Obg domain; that stretch reads MFYDQARIFV…HWLELELKLL (158 aa). In terms of domain architecture, OBG-type G spans 159–329; it reads ADVGLVGFPN…LIYHVHKGLE (171 aa). Residues 165 to 172, 190 to 194, 212 to 215, 282 to 285, and 310 to 312 each bind GTP; these read GFPNVGKS, FTTLE, DIPG, NKMD, and SAA. The Mg(2+) site is built by S172 and T192. Positions 349–427 constitute an OCT domain; the sequence is FTGKTEERFK…IGDLDFDFIE (79 aa).

Belongs to the TRAFAC class OBG-HflX-like GTPase superfamily. OBG GTPase family. Monomer. Mg(2+) serves as cofactor.

It localises to the cytoplasm. In terms of biological role, an essential GTPase which binds GTP, GDP and possibly (p)ppGpp with moderate affinity, with high nucleotide exchange rates and a fairly low GTP hydrolysis rate. Plays a role in control of the cell cycle, stress response, ribosome biogenesis and in those bacteria that undergo differentiation, in morphogenesis control. This is GTPase Obg from Heliobacterium modesticaldum (strain ATCC 51547 / Ice1).